Consider the following 505-residue polypeptide: Pleckstrin homology domain-containing family D member 1 (505 aa).

The region spanning lysine 28–lysine 136 is the PH domain. Residues glutamate 146–arginine 391 are a coiled coil. Positions aspartate 264–leucine 284 are disordered. Polar residues predominate over residues glutamine 267 to proline 278. Position 502 is an omega-N-methylarginine (arginine 502).

The protein belongs to the PLEKHD1 family.

The sequence is that of Pleckstrin homology domain-containing family D member 1 (Plekhd1) from Mus musculus (Mouse).